Consider the following 301-residue polypeptide: 2-aminobenzoylacetyl-CoA thioesterase (301 aa).

Fe cation contacts are provided by histidine 69, histidine 71, aspartate 73, histidine 74, histidine 159, aspartate 178, and histidine 221.

This sequence belongs to the metallo-beta-lactamase superfamily.

It catalyses the reaction (2-aminobenzoyl)acetyl-CoA + H2O = (2-aminobenzoyl)acetate + CoA + H(+). With respect to regulation, thioesterase activity, but not pyocyanine production, is inhibited by 2-(pyridin-3-yl)benzoic acid, 2-(1H-pyrrol-1-yl)benzoic acid and 3-methylthiophene-2-carboxylic acid. Compounds bind to the active center. Required for the biosynthesis of the quorum-sensing signaling molecules 2-heptyl-4(1H)-quinolone (HHQ) and 2-heptyl-3-hydroxy-4(1H)-quinolone (Pseudomonas quinolone signal or PQS), which are important for biofilm formation and virulence. Catalyzes the hydrolysis of the intermediate 2-aminobenzoylacetyl-CoA (2-ABA-CoA) to form 2-aminobenzoylacetate (2-ABA), the precursor of HHQ. In vitro, can also hydrolyze other substrates such as S-ethyl-acetothioacetate and acetoacetyl-CoA, but is inactive against anthraniloyl-CoA, malonyl-CoA and octanoyl-CoA. Beyond its thioesterase function, is involved in the regulation of diverse genes coding for key virulence determinants and biofilm development. In Pseudomonas aeruginosa (strain ATCC 15692 / DSM 22644 / CIP 104116 / JCM 14847 / LMG 12228 / 1C / PRS 101 / PAO1), this protein is 2-aminobenzoylacetyl-CoA thioesterase.